A 141-amino-acid chain; its full sequence is Hemoglobin subunit alpha (141 aa).

In terms of domain architecture, Globin spans 1–141 (VLSAADKTHV…VSTVLVSKYR (141 aa)). Residue Ser3 is modified to Phosphoserine. Lys7 is subject to N6-succinyllysine. At Thr8 the chain carries Phosphothreonine. The residue at position 11 (Lys11) is an N6-succinyllysine. Residue Lys16 is modified to N6-acetyllysine; alternate. Lys16 is subject to N6-succinyllysine; alternate. Ser35 is modified (phosphoserine). Lys40 carries the N6-succinyllysine modification. Ser49 carries the phosphoserine modification. His58 is an O2 binding site. Residue His87 coordinates heme b. At Ser102 the chain carries Phosphoserine. At Thr108 the chain carries Phosphothreonine. Ser124 is modified (phosphoserine). Residue Thr134 is modified to Phosphothreonine. Ser138 is subject to Phosphoserine.

This sequence belongs to the globin family. In terms of assembly, heterotetramer of two alpha chains and two beta chains. In terms of tissue distribution, red blood cells.

Involved in oxygen transport from the lung to the various peripheral tissues. Functionally, hemopressin acts as an antagonist peptide of the cannabinoid receptor CNR1. Hemopressin-binding efficiently blocks cannabinoid receptor CNR1 and subsequent signaling. This Dasypus novemcinctus (Nine-banded armadillo) protein is Hemoglobin subunit alpha (HBA).